We begin with the raw amino-acid sequence, 816 residues long: Nicotine 6-hydroxylase large subunit (816 aa).

Residue E745 participates in Mo-molybdopterin cytosine dinucleotide binding.

It belongs to the xanthine dehydrogenase family. Heterotrimer composed of a large subunit (NdhL), a medium subunit (NdhM) and a small subunit (NdhS). Requires Mo-molybdopterin cytosine dinucleotide as cofactor.

It localises to the cytoplasm. The enzyme catalyses (R)-nicotine + A + H2O = (R)-6-hydroxynicotine + AH2. It catalyses the reaction (S)-nicotine + A + H2O = (S)-6-hydroxynicotine + AH2. The protein operates within alkaloid degradation; nicotine degradation; 6-hydroxypseudooxynicotine from nicotine (R-isomer route): step 1/2. Its pathway is alkaloid degradation; nicotine degradation; 6-hydroxypseudooxynicotine from nicotine (S-isomer route): step 1/2. With respect to regulation, nicotine dehydrogenase activity is inhibited by tungsten. Component of the nicotine 6-hydroxylase, which is involved in the degradation of nicotine. Catalyzes the hydroxylation of the pyridine ring at C6 to form 6-hydroxynicotine. Can use both L-nicotine and D-nicotine. The chain is Nicotine 6-hydroxylase large subunit from Paenarthrobacter nicotinovorans (Arthrobacter nicotinovorans).